Reading from the N-terminus, the 51-residue chain is UPF0337 protein NE0131 (51 aa).

It belongs to the UPF0337 (CsbD) family.

This Nitrosomonas europaea (strain ATCC 19718 / CIP 103999 / KCTC 2705 / NBRC 14298) protein is UPF0337 protein NE0131.